Reading from the N-terminus, the 291-residue chain is ATP synthase gamma chain (291 aa).

The protein belongs to the ATPase gamma chain family. As to quaternary structure, F-type ATPases have 2 components, CF(1) - the catalytic core - and CF(0) - the membrane proton channel. CF(1) has five subunits: alpha(3), beta(3), gamma(1), delta(1), epsilon(1). CF(0) has three main subunits: a, b and c.

Its subcellular location is the cell inner membrane. Produces ATP from ADP in the presence of a proton gradient across the membrane. The gamma chain is believed to be important in regulating ATPase activity and the flow of protons through the CF(0) complex. The chain is ATP synthase gamma chain from Rhodopseudomonas palustris (strain HaA2).